The chain runs to 103 residues: Large ribosomal subunit protein bL21 (103 aa).

Belongs to the bacterial ribosomal protein bL21 family. Part of the 50S ribosomal subunit. Contacts protein L20.

This protein binds to 23S rRNA in the presence of protein L20. The sequence is that of Large ribosomal subunit protein bL21 from Shewanella loihica (strain ATCC BAA-1088 / PV-4).